We begin with the raw amino-acid sequence, 245 residues long: Probable GTP-binding protein EngB (245 aa).

Positions 46–223 (DVPEIAFVGR…AQHLWDWAHP (178 aa)) constitute an EngB-type G domain. GTP-binding positions include 54-61 (GRSNAGKS), 81-85 (GRTQS), 103-106 (DLPG), 173-176 (TKSD), and 202-204 (FSS). Mg(2+) is bound by residues Ser61 and Thr83. A disordered region spans residues 219 to 245 (DWAHPPEKPAKKPKAEPAAEAATGDEG). The span at 222-235 (HPPEKPAKKPKAEP) shows a compositional bias: basic and acidic residues. Over residues 236–245 (AAEAATGDEG) the composition is skewed to low complexity.

This sequence belongs to the TRAFAC class TrmE-Era-EngA-EngB-Septin-like GTPase superfamily. EngB GTPase family. The cofactor is Mg(2+).

Necessary for normal cell division and for the maintenance of normal septation. The sequence is that of Probable GTP-binding protein EngB from Polaromonas sp. (strain JS666 / ATCC BAA-500).